A 264-amino-acid chain; its full sequence is Proteasome subunit beta type-5 (264 aa).

A propeptide spans 1–59 (removed in mature form); sequence MALASVLQRPMPVNQHGFFGLGGGADLLDLGPGSPGDGLSLAAPSWGVPEEPRIEMLHG. The active-site Nucleophile is the Thr-60. Ala-108 is a bortezomib binding site.

It belongs to the peptidase T1B family. The 26S proteasome consists of a 20S proteasome core and two 19S regulatory subunits. The 20S proteasome core is a barrel-shaped complex made of 28 subunits that are arranged in four stacked rings. The two outer rings are each formed by seven alpha subunits, and the two inner rings are formed by seven beta subunits. The proteolytic activity is exerted by three beta-subunits PSMB5, PSMB6 and PSMB7. Directly interacts with POMP. Interacts with ABCB1 and TAP1. In terms of tissue distribution, expressed in uterus at the embryo implantation site.

The protein localises to the cytoplasm. It is found in the nucleus. The catalysed reaction is Cleavage of peptide bonds with very broad specificity.. Its function is as follows. Component of the 20S core proteasome complex involved in the proteolytic degradation of most intracellular proteins. This complex plays numerous essential roles within the cell by associating with different regulatory particles. Associated with two 19S regulatory particles, forms the 26S proteasome and thus participates in the ATP-dependent degradation of ubiquitinated proteins. The 26S proteasome plays a key role in the maintenance of protein homeostasis by removing misfolded or damaged proteins that could impair cellular functions, and by removing proteins whose functions are no longer required. Associated with the PA200 or PA28, the 20S proteasome mediates ubiquitin-independent protein degradation. This type of proteolysis is required in several pathways including spermatogenesis (20S-PA200 complex) or generation of a subset of MHC class I-presented antigenic peptides (20S-PA28 complex). Within the 20S core complex, PSMB5 displays a chymotrypsin-like activity. This is Proteasome subunit beta type-5 (Psmb5) from Mus musculus (Mouse).